A 515-amino-acid chain; its full sequence is 1-pyrroline-5-carboxylate dehydrogenase (515 aa).

Catalysis depends on residues glutamate 286 and cysteine 320.

The protein belongs to the aldehyde dehydrogenase family. RocA subfamily.

It carries out the reaction L-glutamate 5-semialdehyde + NAD(+) + H2O = L-glutamate + NADH + 2 H(+). Its pathway is amino-acid degradation; L-proline degradation into L-glutamate; L-glutamate from L-proline: step 2/2. The chain is 1-pyrroline-5-carboxylate dehydrogenase from Anoxybacillus flavithermus (strain DSM 21510 / WK1).